Consider the following 138-residue polypeptide: Basic phospholipase A2 Tbo-G6D49 (138 aa).

A signal peptide spans 1–16; that stretch reads MRTLWIMAVLLVGVEG. Disulfide bonds link C42–C131, C44–C60, C59–C111, C65–C138, C66–C104, C73–C97, and C91–C102. Residues Y43, G45, and G47 each contribute to the Ca(2+) site. H63 is an active-site residue. D64 contributes to the Ca(2+) binding site. Residue D105 is part of the active site.

As to quaternary structure, monomer. The cofactor is Ca(2+). Expressed by the venom gland.

It localises to the secreted. The catalysed reaction is a 1,2-diacyl-sn-glycero-3-phosphocholine + H2O = a 1-acyl-sn-glycero-3-phosphocholine + a fatty acid + H(+). Snake venom phospholipase A2 (PLA2) that impairs hemostasis. It weakly inhibits ADP-induced platelet aggregation when tested on platelet rich plasma from human and rabbit blood (15-25% of inhibition at 5-10 ug of enzyme), and dose-dependently inhibits blood coagulation, possibly by inhibiting thrombin activation. Exhibits strong hydrolytic activities toward L-dipalmitoyl phosphatidylcholine. PLA2 catalyzes the calcium-dependent hydrolysis of the 2-acyl groups in 3-sn-phosphoglycerides. The protein is Basic phospholipase A2 Tbo-G6D49 of Craspedocephalus borneensis (Borneo pit viper).